The primary structure comprises 418 residues: tRNA(Met) cytidine acetate ligase (418 aa).

ATP is bound by residues G95, N161, and R186.

This sequence belongs to the TmcAL family.

The protein localises to the cytoplasm. The catalysed reaction is cytidine(34) in elongator tRNA(Met) + acetate + ATP = N(4)-acetylcytidine(34) in elongator tRNA(Met) + AMP + diphosphate. Functionally, catalyzes the formation of N(4)-acetylcytidine (ac(4)C) at the wobble position of elongator tRNA(Met), using acetate and ATP as substrates. First activates an acetate ion to form acetyladenylate (Ac-AMP) and then transfers the acetyl group to tRNA to form ac(4)C34. The protein is tRNA(Met) cytidine acetate ligase of Thermotoga petrophila (strain ATCC BAA-488 / DSM 13995 / JCM 10881 / RKU-1).